We begin with the raw amino-acid sequence, 310 residues long: TIGVCYGVVANNLPPANEVVQLYRSNGLTGMRIYFADAKALSALRGSGIGLILDVGGNDVLASLAANASNAANWVRDNVRPYYPAVNIKYIAAGNEVWGGDTQNIVPAMRNLGAALKAPGLGTIKVSTSIRFDAVTNTFPPSNGVFAQAYMTDVARLLASTGAPLLTNVYPYFAYKDNPRDIQLNYATFRPGTTTVRDPNTGLTSQCLFDAMVDAVVAALERSGAPGVRVVVSESGWPSASGFAATADNARAYNQGLIDHVGGGTPKRPGALETYIFAMFNENFKTGELTEKHFGLFNPDKSPAYPIRFQ.

Glutamate 96 acts as the Proton donor in catalysis. Glutamate 234 (nucleophile) is an active-site residue.

This sequence belongs to the glycosyl hydrolase 17 family. As to quaternary structure, monomer. As to expression, young leaves and roots.

The catalysed reaction is Hydrolysis of (1-&gt;3)-beta-D-glucosidic linkages in (1-&gt;3)-beta-D-glucans.. Functionally, may provide a degree of protection against microbial invasion of germinated barley grain through its ability to degrade fungal cell wall polysaccharides. Does not hydrolyze (1,3;1,4)-beta-D-glucans, (1,6)-beta-D-glucan, CM-cellulose, insoluble (1,3)-beta-D-glucans or aryl beta-D-glycosides. This chain is Glucan endo-1,3-beta-glucosidase GI, found in Hordeum vulgare (Barley).